Here is a 319-residue protein sequence, read N- to C-terminus: Ankyrin repeat domain-containing protein 1 (319 aa).

Residues 61-89 are a coiled coil; it reads KSEKQREAELKKKKLEQRSKLENLEDLEI. ANK repeat units lie at residues 152-181, 185-214, 218-247, 251-280, and 284-315; these read YKRT…QIEF, LEST…KISA, LLST…DLNA, EGDT…DLNI, and AGKT…KTSR.

Interacts with YBX1. Interacts with TTN/titin. As to expression, mainly expressed in activated vascular endothelial cells. To a lower extent, also expressed in hepatoma cells.

The protein resides in the nucleus. May play an important role in endothelial cell activation. May act as a nuclear transcription factor that negatively regulates the expression of cardiac genes. Induction seems to be correlated with apoptotic cell death in hepatoma cells. This chain is Ankyrin repeat domain-containing protein 1 (ANKRD1), found in Homo sapiens (Human).